Reading from the N-terminus, the 273-residue chain is Tryptophan synthase alpha chain (273 aa).

Catalysis depends on proton acceptor residues Glu-56 and Asp-67.

The protein belongs to the TrpA family. In terms of assembly, tetramer of two alpha and two beta chains.

It catalyses the reaction (1S,2R)-1-C-(indol-3-yl)glycerol 3-phosphate + L-serine = D-glyceraldehyde 3-phosphate + L-tryptophan + H2O. It functions in the pathway amino-acid biosynthesis; L-tryptophan biosynthesis; L-tryptophan from chorismate: step 5/5. Its function is as follows. The alpha subunit is responsible for the aldol cleavage of indoleglycerol phosphate to indole and glyceraldehyde 3-phosphate. The sequence is that of Tryptophan synthase alpha chain from Shewanella baltica (strain OS155 / ATCC BAA-1091).